Reading from the N-terminus, the 398-residue chain is Lysophospholipid transporter LplT (398 aa).

The next 12 helical transmembrane spans lie at V19–A39, V53–A73, I96–Y116, L139–A159, I164–I184, S195–W213, L227–L247, Y257–V277, T281–L301, A304–V324, N352–A372, and V373–W393.

The protein belongs to the major facilitator superfamily. LplT (TC 2.A.1.42) family.

The protein resides in the cell inner membrane. Its function is as follows. Catalyzes the facilitated diffusion of 2-acyl-glycero-3-phosphoethanolamine (2-acyl-GPE) into the cell. The chain is Lysophospholipid transporter LplT from Salmonella arizonae (strain ATCC BAA-731 / CDC346-86 / RSK2980).